The primary structure comprises 295 residues: uncharacterized protein (295 aa).

Residues 11 to 25 (GYIG…MAKR) and Thr101 contribute to the NAD(+) site. The active site involves Lys176. Lys252 contacts NAD(+).

This sequence belongs to the HIBADH-related family.

This is an uncharacterized protein from Mycobacterium tuberculosis (strain CDC 1551 / Oshkosh).